A 362-amino-acid chain; its full sequence is Probable endopolygalacturonase B (362 aa).

Positions 1–20 (MHFLQNAVVAATMGAALAAA) are cleaved as a signal peptide. Residues 21-25 (APLEK) constitute a propeptide that is removed on maturation. C28 and C43 are oxidised to a cystine. 6 PbH1 repeats span residues 155 to 184 (ADHL…DIGQ), 185 to 206 (STYI…AINS), 207 to 227 (GEHI…SIGS), 236 to 257 (VNDV…RIKT), 265 to 287 (VENV…VVEQ), and 299 to 344 (TNGV…DVTG). Residue D199 is the Proton donor of the active site. A disulfide bridge connects residues C201 and C217. H221 is an active-site residue. C327 and C332 are joined by a disulfide. Residue N334 is glycosylated (N-linked (GlcNAc...) asparagine). Residues C351 and C360 are joined by a disulfide bond.

This sequence belongs to the glycosyl hydrolase 28 family.

It is found in the secreted. The catalysed reaction is (1,4-alpha-D-galacturonosyl)n+m + H2O = (1,4-alpha-D-galacturonosyl)n + (1,4-alpha-D-galacturonosyl)m.. Involved in maceration and soft-rotting of plant tissue. Hydrolyzes the 1,4-alpha glycosidic bonds of de-esterified pectate in the smooth region of the plant cell wall. This chain is Probable endopolygalacturonase B (pgaB), found in Aspergillus niger (strain ATCC MYA-4892 / CBS 513.88 / FGSC A1513).